A 290-amino-acid chain; its full sequence is ATP synthase gamma chain (290 aa).

This sequence belongs to the ATPase gamma chain family. In terms of assembly, F-type ATPases have 2 components, CF(1) - the catalytic core - and CF(0) - the membrane proton channel. CF(1) has five subunits: alpha(3), beta(3), gamma(1), delta(1), epsilon(1). CF(0) has three main subunits: a, b and c.

It localises to the cell inner membrane. Produces ATP from ADP in the presence of a proton gradient across the membrane. The gamma chain is believed to be important in regulating ATPase activity and the flow of protons through the CF(0) complex. In Anaeromyxobacter sp. (strain Fw109-5), this protein is ATP synthase gamma chain.